The following is a 177-amino-acid chain: Nicotinamide-nucleotide adenylyltransferase (177 aa).

This sequence belongs to the archaeal NMN adenylyltransferase family.

The protein localises to the cytoplasm. The catalysed reaction is beta-nicotinamide D-ribonucleotide + ATP + H(+) = diphosphate + NAD(+). The protein operates within cofactor biosynthesis; NAD(+) biosynthesis; NAD(+) from nicotinamide D-ribonucleotide: step 1/1. This is Nicotinamide-nucleotide adenylyltransferase from Halobacterium salinarum (strain ATCC 29341 / DSM 671 / R1).